Here is a 145-residue protein sequence, read N- to C-terminus: MDLNFDLYMTDVVNQARNEIEEAGYEQLTSADEVDSVLKQEGTSLVMVNSVCGCAGGIARPAATHALHYDKLPDRLVTVFAGQDKEATQRARDYFEGYAPSSPSFALIKDGKVTEMIERHQIEGHDVMNVITQLQNLFDNYCVEK.

It belongs to the bacilliredoxin family.

This chain is Bacilliredoxin SSP1241, found in Staphylococcus saprophyticus subsp. saprophyticus (strain ATCC 15305 / DSM 20229 / NCIMB 8711 / NCTC 7292 / S-41).